Consider the following 214-residue polypeptide: Large ribosomal subunit protein uL16 (214 aa).

Arg32 is modified (citrulline). Lys175 is covalently cross-linked (Glycyl lysine isopeptide (Lys-Gly) (interchain with G-Cter in SUMO2)). Lys188 is covalently cross-linked (Glycyl lysine isopeptide (Lys-Gly) (interchain with G-Cter in ubiquitin)).

The protein belongs to the universal ribosomal protein uL16 family. Component of the large ribosomal subunit. Mature ribosomes consist of a small (40S) and a large (60S) subunit. The 40S subunit contains about 33 different proteins and 1 molecule of RNA (18S). The 60S subunit contains about 49 different proteins and 3 molecules of RNA (28S, 5.8S and 5S). Citrullinated by PADI4. In terms of processing, ufmylated by UFL1.

It localises to the cytoplasm. Functionally, component of the large ribosomal subunit. Plays a role in the formation of actively translating ribosomes. May play a role in the embryonic brain development. This chain is Large ribosomal subunit protein uL16, found in Rattus norvegicus (Rat).